The following is a 161-amino-acid chain: Globin CTT-VIIB-8 (161 aa).

Positions 1–16 (MKFFAVLALCIVGAIA) are cleaved as a signal peptide. A Globin domain is found at 18–161 (PLTADEASLV…NTYAIVVPRL (144 aa)). The heme b site is built by H76 and H111.

This sequence belongs to the globin family. Homodimer.

This chain is Globin CTT-VIIB-8 (CTT-7B8), found in Chironomus thummi thummi (Midge).